The chain runs to 308 residues: tRNA pseudouridine synthase B (308 aa).

Asp-46 (nucleophile) is an active-site residue.

It belongs to the pseudouridine synthase TruB family. Type 1 subfamily.

It catalyses the reaction uridine(55) in tRNA = pseudouridine(55) in tRNA. Functionally, responsible for synthesis of pseudouridine from uracil-55 in the psi GC loop of transfer RNAs. This is tRNA pseudouridine synthase B from Marinomonas sp. (strain MWYL1).